Here is a 106-residue protein sequence, read N- to C-terminus: Programmed cell death activator egl-1 (106 aa).

Residues 73 to 81 form a BH3-like region; the sequence is LAAMCDDFD.

Interacts with ced-9; the interaction results in ced-4 release from the ced-4/ced-9 complex. Interaction with ced-9 may enhance interaction of ced-9 with drp-1, but not with ced-4. A ced-9/egl-1 complex may recruit drp-1 to the mitochondrial surface.

The protein resides in the synapse. Plays a major role in programmed cell death (PCD or apoptosis) by negatively regulating ced-9. Binds to and directly inhibits the activity of ced-9, releasing the cell death activator ced-4 from a ced-9/ced-4 containing protein complex and allowing ced-4 to activate the cell-killing caspase ced-3. Required to activate programmed cell death in the sister cells of the serotonergic neurosecretory motor (NSM) neurons during embryogenesis. Required to activate programmed cell death in the sister cells of the M4 motor neuron and I1 pharyngeal neuron during embryogenesis. During larval development, required for the elimination of transient presynaptic components upstream of ced-9, ced-4 and ced-3 apoptotic pathway. Together with ain-1, a component of the miRNA-induced-silencing complex (miRISC), and probably upstream of ced-3 and ced-4, regulates temporal cell fate patterning during larval development. Has been shown in two studies to be dispensable in mitochondrial dynamics and morphology during early embryonic development. However, one study shows that during larval development, egl-1 is involved in modulating mitochondrial dynamics, perhaps acting by stabilizing the interaction between ced-9 and drp-1 in order to promote mitochondrial fission. Involved in inducing mitochondrial fragmentation during apoptosis, probably acting via ced-9 and dynamin-related protein drp-1. The sequence is that of Programmed cell death activator egl-1 from Caenorhabditis elegans.